A 252-amino-acid chain; its full sequence is uncharacterized protein (252 aa).

The protein belongs to the GSP E family.

This is an uncharacterized protein from Methanocaldococcus jannaschii (strain ATCC 43067 / DSM 2661 / JAL-1 / JCM 10045 / NBRC 100440) (Methanococcus jannaschii).